Reading from the N-terminus, the 1218-residue chain is Structural maintenance of chromosomes protein 2 (1218 aa).

32–39 is an ATP binding site; sequence GLNGSGKS. A coiled-coil region spans residues 209–517; that stretch reads VKLKKEKEEY…INSVKIDYKI (309 aa). Residues 525-654 enclose the SMC hinge domain; that stretch reads DVLGQIYKLI…CSNVDLCKKI (130 aa). Coiled coils occupy residues 693–949 and 978–1045; these read LNYE…DTVK and RHDV…KKSE.

Belongs to the SMC family. SMC2 subfamily.

It is found in the nucleus. Its function is as follows. May play a role in the conversion of interphase chromatin into condensed chromosomes. This is Structural maintenance of chromosomes protein 2 from Plasmodium falciparum (isolate 3D7).